We begin with the raw amino-acid sequence, 227 residues long: Transmembrane emp24 domain-containing protein 1 (227 aa).

Positions 1–23 are cleaved as a signal peptide; it reads MMAAGTALGLALWLLLPPVGVGG. The Extracellular segment spans residues 24–194; it reads AGPPPIQDGE…LQEGNLERVN (171 aa). In terms of domain architecture, GOLD spans 43–125; it reads KQCFYQSAPA…EKLVFFELIF (83 aa). Residues 145–170 are a coiled coil; sequence EILEVKMEDIKESIETMRIRLERSIQ. The helical transmembrane segment at 195–215 threads the bilayer; sequence FWSAVNVAVLLLVAVLQVCTL. Over 216 to 227 the chain is Cytoplasmic; it reads KRFFQDKRPVPM. The short motif at 218–219 is the COPII vesicle coat-binding element; the sequence is FF. Residues 218 to 227 carry the COPI vesicle coat-binding motif; it reads FFQDKRPVPM.

The protein belongs to the EMP24/GP25L family. Homodimer in endoplasmic reticulum, endoplasmic reticulum-Golgi intermediate compartment and cis-Golgi network. Interacts with IL1RL1. Interacts with RNF26; this interaction is important to modulate innate immune signaling through the cGAS-STING pathway.

The protein localises to the cell membrane. Its subcellular location is the endoplasmic reticulum membrane. It localises to the golgi apparatus. It is found in the cis-Golgi network membrane. The protein resides in the endoplasmic reticulum-Golgi intermediate compartment membrane. In terms of biological role, potential role in vesicular protein trafficking, mainly in the early secretory pathway. May act as a cargo receptor at the lumenal side for incorporation of secretory cargo molecules into transport vesicles and may be involved in vesicle coat formation at the cytoplasmic side. Plays a positive role in IL-33-mediated IL-8 and IL-6 production by interacting with interleukin-33 receptor IL1RL1. Plays also a role in the modulation of innate immune signaling through the cGAS-STING pathway by interacting with RNF26. This is Transmembrane emp24 domain-containing protein 1 (TMED1) from Bos taurus (Bovine).